Consider the following 421-residue polypeptide: 4-hydroxy-3-methylbut-2-en-1-yl diphosphate synthase (flavodoxin) (421 aa).

[4Fe-4S] cluster-binding residues include C311, C314, C357, and E364.

Belongs to the IspG family. It depends on [4Fe-4S] cluster as a cofactor.

The enzyme catalyses (2E)-4-hydroxy-3-methylbut-2-enyl diphosphate + oxidized [flavodoxin] + H2O + 2 H(+) = 2-C-methyl-D-erythritol 2,4-cyclic diphosphate + reduced [flavodoxin]. The protein operates within isoprenoid biosynthesis; isopentenyl diphosphate biosynthesis via DXP pathway; isopentenyl diphosphate from 1-deoxy-D-xylulose 5-phosphate: step 5/6. In terms of biological role, converts 2C-methyl-D-erythritol 2,4-cyclodiphosphate (ME-2,4cPP) into 1-hydroxy-2-methyl-2-(E)-butenyl 4-diphosphate. This Xanthomonas campestris pv. campestris (strain 8004) protein is 4-hydroxy-3-methylbut-2-en-1-yl diphosphate synthase (flavodoxin).